A 487-amino-acid chain; its full sequence is MSDVYADWESVIGLEVHVELNTKSKLFSCARNRFGDEPNTNISPVCTGMPGSLPVLNKEAVRKAILFGCAVQGEVALLSRFDRKSYFYPDSPRNFQITQFEHPIVRGGRVKAIVQGEERYFELAQAHIEDDAGMLKHFGEFAGVDYNRAGVPLIEIVSKPCMFCADDAVAYATALVSLLDYIGISDCNMEEGSVRFDVNVSVRPRGSDELRNKVEIKNMNSFAFMAQALEAERCRQIEAYLENPNKDPKTVIPGATYRWDPEKKKTVLMRLKERAEDYKYFIEPDLPVLQLTEAYINEIRDTLPELPYDKYQRYLHDYALAEDIAAILISDKHIAHFFELAAAECKNYRALSNWVTVEFAGRCKTQGKNLAFSGILPSSVAQLVNFIDKGVITGKIAKDLADMMMESPEKSPEAILNEHPEMLPMTDESALVAIISEVLAANAQSVIDYKNGKTKALGFLVGQIMKRTQGKAPPNRVNELLLAELDK.

The protein belongs to the GatB/GatE family. GatB subfamily. Heterotrimer of A, B and C subunits.

It catalyses the reaction L-glutamyl-tRNA(Gln) + L-glutamine + ATP + H2O = L-glutaminyl-tRNA(Gln) + L-glutamate + ADP + phosphate + H(+). It carries out the reaction L-aspartyl-tRNA(Asn) + L-glutamine + ATP + H2O = L-asparaginyl-tRNA(Asn) + L-glutamate + ADP + phosphate + 2 H(+). Allows the formation of correctly charged Asn-tRNA(Asn) or Gln-tRNA(Gln) through the transamidation of misacylated Asp-tRNA(Asn) or Glu-tRNA(Gln) in organisms which lack either or both of asparaginyl-tRNA or glutaminyl-tRNA synthetases. The reaction takes place in the presence of glutamine and ATP through an activated phospho-Asp-tRNA(Asn) or phospho-Glu-tRNA(Gln). The polypeptide is Aspartyl/glutamyl-tRNA(Asn/Gln) amidotransferase subunit B (Chlamydia caviae (strain ATCC VR-813 / DSM 19441 / 03DC25 / GPIC) (Chlamydophila caviae)).